Consider the following 281-residue polypeptide: General control transcription factor GCN4 (281 aa).

Ser-17 is modified (phosphoserine). Required for transcriptional activation regions lie at residues Leu-89 to Ser-100 and Pro-106 to Asp-125. Residue Thr-165 is modified to Phosphothreonine; by PHO85. The Nuclear localization signal motif lies at Val-167–Leu-200. A disordered region spans residues Leu-217 to Gln-248. Phosphoserine is present on Ser-218. Residues Ser-225–Arg-281 enclose the bZIP domain. The short motif at Lys-231–Arg-249 is the Nuclear localization signal element. The basic motif stretch occupies residues Lys-231 to Lys-251. Residues Leu-253–Leu-274 are leucine-zipper.

The protein belongs to the bZIP family. GCN4 subfamily. Homodimer. Each subunit binds overlapping and non-identical half-sites that flank the central CG base-pair in the pseudo-palindromic motif 5'-ATGA[CG]TCAT-3'. Interacts with the mediator tail; the interaction with GAL11/MED15 is direct. Interacts with the SAGA histone acetyltransferase complex. Interacts with the SWI/SNF chromatin remodeling complex. In terms of processing, phosphorylated by the cyclin-CDK PCL5-PHO85. Phosphorylation of Thr-165 induces degradation of GCN4 by the E3 ubiquitin ligase complex SCF(Cdc4).

The protein localises to the nucleus. Master transcriptional regulator that mediates the response to amino acid starvation. Binds variations of the DNA sequence 5'-ATGA[CG]TCAT-3' in canonical nucleosome-depleted 5'-positioned promoters, and also within coding sequences and 3' non-coding regions. During nutrient starvation (low or poor amino acid, carbon or purine sources), it activates genes required for amino acid biosynthesis and transport, autophagy, cofactor biosynthesis and transport, mitochondrial transport, and additional downstream transcription factors. Activates transcription by recruiting multiple coactivators, including the mediator complex, the SAGA complex, and the SWI/SNF complex, to enable assembly of the pre-initiation complex at core promoters. The polypeptide is General control transcription factor GCN4 (Saccharomyces cerevisiae (strain ATCC 204508 / S288c) (Baker's yeast)).